A 119-amino-acid polypeptide reads, in one-letter code: Holo-[acyl-carrier-protein] synthase (119 aa).

Positions 5 and 51 each coordinate Mg(2+).

Belongs to the P-Pant transferase superfamily. AcpS family. Mg(2+) is required as a cofactor.

The protein localises to the cytoplasm. It catalyses the reaction apo-[ACP] + CoA = holo-[ACP] + adenosine 3',5'-bisphosphate + H(+). Transfers the 4'-phosphopantetheine moiety from coenzyme A to a Ser of acyl-carrier-protein. The protein is Holo-[acyl-carrier-protein] synthase of Helicobacter pylori (strain J99 / ATCC 700824) (Campylobacter pylori J99).